A 492-amino-acid chain; its full sequence is E3 ubiquitin-protein ligase ARIH2 (492 aa).

Polar residues predominate over residues 1–11 (MSVDMNSQGSD). The disordered stretch occupies residues 1-37 (MSVDMNSQGSDSNEEDYDPNCEEEEEEEEDPGDIEDY). The span at 12 to 36 (SNEEDYDPNCEEEEEEEEDPGDIED) shows a compositional bias: acidic residues. The interval 64–111 (TYKESEGALHEHMTSLASVLKVSHSVAKLILVNFHWQVSEILDRYRSN) is UBA-like. The tract at residues 134 to 343 (PPHHCAVCMQ…SEYYECSRYK (210 aa)) is TRIAD supradomain. Residues C138, C141, C155, H157, C160, C163, C182, C187, C227, C232, C248, C251, C256, C259, H264, C269, C296, and C299 each coordinate Zn(2+). The RING-type 1 zinc finger occupies 138–187 (CAVCMQFVRKENLLSLACQHQFCRSCWEQHCSVLVKDGVGVGISCMAQDC). Residues 207 to 269 (DKYRRYLFRD…RQMYHAPTDC (63 aa)) form an IBR-type zinc finger. The RING-type 2; atypical zinc-finger motif lies at 296–325 (CPKCNICIEKNGGCNHMQCSKCKHDFCWMC). Residue C309 is part of the active site. Zn(2+) is bound by residues C314, C317, C322, C325, H332, and C339. S352 carries the phosphoserine modification. An ariadne domain region spans residues 358 to 492 (REALKKYLFY…RTLLKDFHDT (135 aa)).

The protein belongs to the RBR family. Ariadne subfamily. In terms of assembly, interacts (via RING-type zinc finger 1) with UBE2L3. Interacts (via RING-type zinc finger 2) with UBE2N. Interacts with neddylated CUL5. Interacts (via RING-type 2) with GFI1B. Interacts with GFI1; prevents its ubiquitination and proteasomal degradation. Interacts with DCUN1D1 (via UBA-like domain); promotes DCUN1D1 ubiquitination. In terms of processing, ubiquitinated. Ubiquitination promotes proteasomal degradation.

Its subcellular location is the nucleus. It is found in the cytoplasm. It catalyses the reaction [E2 ubiquitin-conjugating enzyme]-S-ubiquitinyl-L-cysteine + [acceptor protein]-L-lysine = [E2 ubiquitin-conjugating enzyme]-L-cysteine + [acceptor protein]-N(6)-ubiquitinyl-L-lysine.. Its pathway is protein modification; protein ubiquitination. With respect to regulation, autoinhibited by the ariadne domain, which masks the second RING-type zinc finger that contains the active site and inhibits the E3 activity. Inhibition is relieved upon binding to neddylated cullin-RING ubiquitin ligase complexes, which activate the E3 ligase activity of ARIH1. E3 ubiquitin-protein ligase, which catalyzes ubiquitination of target proteins together with ubiquitin-conjugating enzyme E2 UBE2L3. Acts as an atypical E3 ubiquitin-protein ligase by working together with cullin-5-RING ubiquitin ligase complex (ECS complex, also named CRL5 complex) and initiating ubiquitination of ECS substrates: associates with ECS complex and specifically mediates addition of the first ubiquitin on ECS targets. The initial ubiquitin is then elongated. E3 ubiquitin-protein ligase activity is activated upon binding to neddylated form of the ECS complex. Mediates 'Lys-6', 'Lys-48'- and 'Lys-63'-linked polyubiquitination. May play a role in myelopoiesis. This Mus musculus (Mouse) protein is E3 ubiquitin-protein ligase ARIH2 (Arih2).